A 424-amino-acid polypeptide reads, in one-letter code: Adenylosuccinate synthetase 2 (424 aa).

GTP is bound by residues 11-17 (GDEGKGK) and 39-41 (GHT). Catalysis depends on Asp12, which acts as the Proton acceptor. Mg(2+) contacts are provided by Asp12 and Gly39. IMP contacts are provided by residues 12–15 (DEGK), 37–40 (NAGH), Thr127, Arg141, Gln223, Thr238, and Arg302. Residue His40 is the Proton donor of the active site. 298 to 304 (TTTGRGR) contacts substrate. GTP contacts are provided by residues Arg304, 330 to 332 (KLD), and 412 to 414 (SVG).

Belongs to the adenylosuccinate synthetase family. In terms of assembly, homodimer. The cofactor is Mg(2+).

Its subcellular location is the cytoplasm. It carries out the reaction IMP + L-aspartate + GTP = N(6)-(1,2-dicarboxyethyl)-AMP + GDP + phosphate + 2 H(+). Its pathway is purine metabolism; AMP biosynthesis via de novo pathway; AMP from IMP: step 1/2. Its function is as follows. Plays an important role in the de novo pathway of purine nucleotide biosynthesis. Catalyzes the first committed step in the biosynthesis of AMP from IMP. The chain is Adenylosuccinate synthetase 2 from Methanosarcina acetivorans (strain ATCC 35395 / DSM 2834 / JCM 12185 / C2A).